A 129-amino-acid chain; its full sequence is MSYESGDFDRVVRFDNRLLGSVSHAPHIDTGSTPTGAAGRPQLSLVPDSFDVAPEAEEDQWQERALCAQTDPEAFFPEKGGSTREAKRICQGCEVRDACLEYALAHDERFGIWGGLSERERRRLKRGII.

The interval 23–45 (SHAPHIDTGSTPTGAAGRPQLSL) is disordered. Residues 66–123 (LCAQTDPEAFFPEKGGSTREAKRICQGCEVRDACLEYALAHDERFGIWGGLSERERRR) enclose the 4Fe-4S Wbl-type domain. Cysteine 67, cysteine 90, cysteine 93, and cysteine 99 together coordinate [4Fe-4S] cluster.

The protein belongs to the WhiB family. [4Fe-4S] cluster is required as a cofactor. The Fe-S cluster can be nitrosylated by nitric oxide (NO). Post-translationally, upon Fe-S cluster removal intramolecular disulfide bonds are formed.

It localises to the cytoplasm. In terms of biological role, acts as a transcriptional regulator. Probably redox-responsive. The apo- but not holo-form probably binds DNA. This Mycolicibacterium smegmatis (strain ATCC 700084 / mc(2)155) (Mycobacterium smegmatis) protein is Transcriptional regulator WhiB2 (whiB2).